We begin with the raw amino-acid sequence, 37 residues long: Cytochrome b6-f complex subunit 7 (37 aa).

Residues 11 to 29 traverse the membrane as a helical segment; that stretch reads AILSIVLVLVGLAWGFLLL.

The protein belongs to the PetM family. The 4 large subunits of the cytochrome b6-f complex are cytochrome b6, subunit IV (17 kDa polypeptide, PetD), cytochrome f and the Rieske protein, while the 4 small subunits are PetG, PetL, PetM and PetN. The complex functions as a dimer.

Its subcellular location is the cellular thylakoid membrane. In terms of biological role, component of the cytochrome b6-f complex, which mediates electron transfer between photosystem II (PSII) and photosystem I (PSI), cyclic electron flow around PSI, and state transitions. In Gloeothece citriformis (strain PCC 7424) (Cyanothece sp. (strain PCC 7424)), this protein is Cytochrome b6-f complex subunit 7.